Consider the following 661-residue polypeptide: tRNA uridine 5-carboxymethylaminomethyl modification enzyme MnmG (661 aa).

Residues 16–21 (GAGHAG), valine 128, and serine 183 contribute to the FAD site. Positions 206 to 230 (PRVNGNTIDYSKTEEEPGDKTPRHF) are disordered. The span at 216–230 (SKTEEEPGDKTPRHF) shows a compositional bias: basic and acidic residues. 277–291 (GPRYCPSIEDKVVRF) is an NAD(+) binding site. Glutamine 374 contributes to the FAD binding site.

This sequence belongs to the MnmG family. As to quaternary structure, homodimer. Heterotetramer of two MnmE and two MnmG subunits. The cofactor is FAD.

It is found in the cytoplasm. NAD-binding protein involved in the addition of a carboxymethylaminomethyl (cmnm) group at the wobble position (U34) of certain tRNAs, forming tRNA-cmnm(5)s(2)U34. This Lactobacillus helveticus (strain DPC 4571) protein is tRNA uridine 5-carboxymethylaminomethyl modification enzyme MnmG.